The sequence spans 216 residues: Small ribosomal subunit protein uS4 (216 aa).

The S4 RNA-binding domain occupies 111 to 175 (RRLQTQVLRL…SPLVSESHPE (65 aa)). The disordered stretch occupies residues 194-216 (VAEAKQAKEKPPERGGRKRRGRR). Basic and acidic residues predominate over residues 198 to 208 (KQAKEKPPERG).

This sequence belongs to the universal ribosomal protein uS4 family. Part of the 30S ribosomal subunit. Contacts protein S5. The interaction surface between S4 and S5 is involved in control of translational fidelity.

Functionally, one of the primary rRNA binding proteins, it binds directly to 16S rRNA where it nucleates assembly of the body of the 30S subunit. With S5 and S12 plays an important role in translational accuracy. This Methanosarcina barkeri (strain Fusaro / DSM 804) protein is Small ribosomal subunit protein uS4.